The following is a 173-amino-acid chain: ADP-ribosylation factor-like protein 11 (173 aa).

The N-myristoyl glycine moiety is linked to residue Gly2. GTP-binding positions include 17–24, 61–65, and 120–123; these read GLDCAGKT, DIGGQ, and NKQE.

This sequence belongs to the small GTPase superfamily. Arf family.

In terms of biological role, may play a role in apoptosis. May act as a tumor suppressor. The sequence is that of ADP-ribosylation factor-like protein 11 (Arl11) from Rattus norvegicus (Rat).